We begin with the raw amino-acid sequence, 237 residues long: Heme oxygenase (237 aa).

His17 contributes to the heme b binding site.

This sequence belongs to the heme oxygenase family.

The protein resides in the plastid. It localises to the chloroplast. It carries out the reaction heme b + 3 reduced [NADPH--hemoprotein reductase] + 3 O2 = biliverdin IXalpha + CO + Fe(2+) + 3 oxidized [NADPH--hemoprotein reductase] + 3 H2O + H(+). Catalyzes the opening of the heme ring with the release of iron. Key enzyme in the synthesis of the chromophoric part of the photosynthetic antennae. The polypeptide is Heme oxygenase (pbsA) (Guillardia theta (Cryptophyte)).